A 107-amino-acid chain; its full sequence is Replication restart protein PriB (107 aa).

The region spanning 1–97 (MNTLELSARV…LHLQQARRIA (97 aa)) is the SSB domain.

Belongs to the PriB family. In terms of assembly, homodimer. Interacts with PriA and DnaT. Component of the replication restart primosome. Primosome assembly occurs via a 'hand-off' mechanism. PriA binds to replication forks, subsequently PriB then DnaT bind; DnaT then displaces ssDNA to generate the helicase loading substrate.

Involved in the restart of stalled replication forks, which reloads the replicative helicase on sites other than the origin of replication; the PriA-PriB pathway is the major replication restart pathway. During primosome assembly it facilitates complex formation between PriA and DnaT on DNA; stabilizes PriA on DNA. Stimulates the DNA unwinding activity of PriA helicase. The polypeptide is Replication restart protein PriB (Bordetella parapertussis (strain 12822 / ATCC BAA-587 / NCTC 13253)).